The primary structure comprises 280 residues: Protoheme IX farnesyltransferase (280 aa).

The next 9 membrane-spanning stretches (helical) occupy residues 2–21 (VVAT…RAGL), 30–50 (AAVP…VVSG), 83–103 (LALW…LVGV), 105–125 (ATTG…YTPL), 131–151 (LSLP…WTSV), 160–180 (FLLF…ISLF), 206–226 (IVGY…LGVA), 229–249 (VYLG…VYGL), and 260–280 (QVFF…MIGA).

It belongs to the UbiA prenyltransferase family. Protoheme IX farnesyltransferase subfamily.

It localises to the cell inner membrane. The catalysed reaction is heme b + (2E,6E)-farnesyl diphosphate + H2O = Fe(II)-heme o + diphosphate. It participates in porphyrin-containing compound metabolism; heme O biosynthesis; heme O from protoheme: step 1/1. Functionally, converts heme B (protoheme IX) to heme O by substitution of the vinyl group on carbon 2 of heme B porphyrin ring with a hydroxyethyl farnesyl side group. The protein is Protoheme IX farnesyltransferase of Sorangium cellulosum (strain So ce56) (Polyangium cellulosum (strain So ce56)).